Reading from the N-terminus, the 323-residue chain is L-lactate dehydrogenase (323 aa).

Residues Val18, Asp39, Tyr69, and 83–84 (GA) contribute to the NAD(+) site. Substrate contacts are provided by Gln86 and Arg92. NAD(+) is bound by residues Ser105, 122 to 124 (VAN), and Ser147. 124-127 (NPVD) provides a ligand contact to substrate. 152–155 (DTGR) contributes to the substrate binding site. His179 acts as the Proton acceptor in catalysis. Residue Tyr223 is modified to Phosphotyrosine. Thr232 contacts substrate.

Belongs to the LDH/MDH superfamily. LDH family. Homotetramer.

The protein resides in the cytoplasm. The catalysed reaction is (S)-lactate + NAD(+) = pyruvate + NADH + H(+). It functions in the pathway fermentation; pyruvate fermentation to lactate; (S)-lactate from pyruvate: step 1/1. Under neutral conditions, the reaction is stimulated 4-fold by fructose 1,6-bisphosphate (FBP), however the L-lactate dehydrogenase is a nonallosteric enzyme. Calcium and zinc ions at 1 mM stimulate the activity almost 2-fold. Weakly inhibited by cadmium, cobalt and copper ions. Its function is as follows. Catalyzes the conversion of lactate to pyruvate. This is L-lactate dehydrogenase from Lactobacillus helveticus (Lactobacillus suntoryeus).